The sequence spans 596 residues: Elongation factor 4 (596 aa).

One can recognise a tr-type G domain in the interval 2–184; the sequence is KNIRNFSIIA…TIVKNIPSPA (183 aa). GTP is bound by residues 14–19 and 131–134; these read DHGKST and NKID.

Belongs to the TRAFAC class translation factor GTPase superfamily. Classic translation factor GTPase family. LepA subfamily.

It localises to the cell inner membrane. The enzyme catalyses GTP + H2O = GDP + phosphate + H(+). Functionally, required for accurate and efficient protein synthesis under certain stress conditions. May act as a fidelity factor of the translation reaction, by catalyzing a one-codon backward translocation of tRNAs on improperly translocated ribosomes. Back-translocation proceeds from a post-translocation (POST) complex to a pre-translocation (PRE) complex, thus giving elongation factor G a second chance to translocate the tRNAs correctly. Binds to ribosomes in a GTP-dependent manner. This Colwellia psychrerythraea (strain 34H / ATCC BAA-681) (Vibrio psychroerythus) protein is Elongation factor 4.